Consider the following 137-residue polypeptide: TM2 domain-containing protein DDB_G0287015 (137 aa).

One can recognise a TM2 domain in the interval 9–57 (QASLVVAYLLLIFLGFFGVHRFYVGRTISGVVYLLTGGIFGIGYIVDFF). A run of 2 helical transmembrane segments spans residues 12 to 32 (LVVAYLLLIFLGFFGVHRFYV) and 39 to 59 (VVYLLTGGIFGIGYIVDFFLL). The tract at residues 106-137 (IQPQQQQYYQQPYQQQQYQPQPYQPNSPQYQP) is disordered.

Belongs to the TM2 family.

Its subcellular location is the membrane. The sequence is that of TM2 domain-containing protein DDB_G0287015 from Dictyostelium discoideum (Social amoeba).